A 383-amino-acid chain; its full sequence is Protein RecA (383 aa).

79–86 (GPESSGKT) contacts ATP.

Belongs to the RecA family.

Its subcellular location is the cytoplasm. Functionally, can catalyze the hydrolysis of ATP in the presence of single-stranded DNA, the ATP-dependent uptake of single-stranded DNA by duplex DNA, and the ATP-dependent hybridization of homologous single-stranded DNAs. It interacts with LexA causing its activation and leading to its autocatalytic cleavage. The polypeptide is Protein RecA (Streptococcus gordonii (strain Challis / ATCC 35105 / BCRC 15272 / CH1 / DL1 / V288)).